Here is a 290-residue protein sequence, read N- to C-terminus: 33 kDa chaperonin (290 aa).

Cystine bridges form between C235/C237 and C268/C271.

This sequence belongs to the HSP33 family. In terms of processing, under oxidizing conditions two disulfide bonds are formed involving the reactive cysteines. Under reducing conditions zinc is bound to the reactive cysteines and the protein is inactive.

The protein localises to the cytoplasm. Redox regulated molecular chaperone. Protects both thermally unfolding and oxidatively damaged proteins from irreversible aggregation. Plays an important role in the bacterial defense system toward oxidative stress. The protein is 33 kDa chaperonin of Streptococcus equi subsp. zooepidemicus (strain H70).